The following is an 82-amino-acid chain: ATP synthase subunit c, chloroplastic (82 aa).

2 consecutive transmembrane segments (helical) span residues 4-24 (IISA…AIGP) and 57-77 (LAFM…LLFA).

This sequence belongs to the ATPase C chain family. In terms of assembly, F-type ATPases have 2 components, F(1) - the catalytic core - and F(0) - the membrane proton channel. F(1) has five subunits: alpha(3), beta(3), gamma(1), delta(1), epsilon(1). F(0) has four main subunits: a(1), b(1), b'(1) and c(10-14). The alpha and beta chains form an alternating ring which encloses part of the gamma chain. F(1) is attached to F(0) by a central stalk formed by the gamma and epsilon chains, while a peripheral stalk is formed by the delta, b and b' chains.

It localises to the plastid. Its subcellular location is the chloroplast thylakoid membrane. F(1)F(0) ATP synthase produces ATP from ADP in the presence of a proton or sodium gradient. F-type ATPases consist of two structural domains, F(1) containing the extramembraneous catalytic core and F(0) containing the membrane proton channel, linked together by a central stalk and a peripheral stalk. During catalysis, ATP synthesis in the catalytic domain of F(1) is coupled via a rotary mechanism of the central stalk subunits to proton translocation. Functionally, key component of the F(0) channel; it plays a direct role in translocation across the membrane. A homomeric c-ring of between 10-14 subunits forms the central stalk rotor element with the F(1) delta and epsilon subunits. In Antithamnion sp. (Red alga), this protein is ATP synthase subunit c, chloroplastic.